Here is a 212-residue protein sequence, read N- to C-terminus: Imidazole glycerol phosphate synthase subunit HisH (212 aa).

Residues 1–210 (MIAVINYGAG…VRWSEAVQPK (210 aa)) enclose the Glutamine amidotransferase type-1 domain. The active-site Nucleophile is the Cys79. Active-site residues include His185 and Glu187.

In terms of assembly, heterodimer of HisH and HisF.

It localises to the cytoplasm. The catalysed reaction is 5-[(5-phospho-1-deoxy-D-ribulos-1-ylimino)methylamino]-1-(5-phospho-beta-D-ribosyl)imidazole-4-carboxamide + L-glutamine = D-erythro-1-(imidazol-4-yl)glycerol 3-phosphate + 5-amino-1-(5-phospho-beta-D-ribosyl)imidazole-4-carboxamide + L-glutamate + H(+). It carries out the reaction L-glutamine + H2O = L-glutamate + NH4(+). It participates in amino-acid biosynthesis; L-histidine biosynthesis; L-histidine from 5-phospho-alpha-D-ribose 1-diphosphate: step 5/9. Its function is as follows. IGPS catalyzes the conversion of PRFAR and glutamine to IGP, AICAR and glutamate. The HisH subunit catalyzes the hydrolysis of glutamine to glutamate and ammonia as part of the synthesis of IGP and AICAR. The resulting ammonia molecule is channeled to the active site of HisF. This is Imidazole glycerol phosphate synthase subunit HisH from Chloroflexus aurantiacus (strain ATCC 29364 / DSM 637 / Y-400-fl).